The primary structure comprises 291 residues: Aspartate carbamoyltransferase catalytic subunit (291 aa).

Positions 47 and 48 each coordinate carbamoyl phosphate. An L-aspartate-binding site is contributed by lysine 75. Residues arginine 97, histidine 126, and glutamine 129 each coordinate carbamoyl phosphate. Residues arginine 159 and arginine 213 each coordinate L-aspartate. Glycine 251 and proline 252 together coordinate carbamoyl phosphate.

The protein belongs to the aspartate/ornithine carbamoyltransferase superfamily. ATCase family. In terms of assembly, heterododecamer (2C3:3R2) of six catalytic PyrB chains organized as two trimers (C3), and six regulatory PyrI chains organized as three dimers (R2).

The catalysed reaction is carbamoyl phosphate + L-aspartate = N-carbamoyl-L-aspartate + phosphate + H(+). It participates in pyrimidine metabolism; UMP biosynthesis via de novo pathway; (S)-dihydroorotate from bicarbonate: step 2/3. In terms of biological role, catalyzes the condensation of carbamoyl phosphate and aspartate to form carbamoyl aspartate and inorganic phosphate, the committed step in the de novo pyrimidine nucleotide biosynthesis pathway. This chain is Aspartate carbamoyltransferase catalytic subunit, found in Aquifex aeolicus (strain VF5).